We begin with the raw amino-acid sequence, 166 residues long: Large ribosomal subunit protein uL10 (166 aa).

Belongs to the universal ribosomal protein uL10 family. In terms of assembly, part of the ribosomal stalk of the 50S ribosomal subunit. The N-terminus interacts with L11 and the large rRNA to form the base of the stalk. The C-terminus forms an elongated spine to which L12 dimers bind in a sequential fashion forming a multimeric L10(L12)X complex.

In terms of biological role, forms part of the ribosomal stalk, playing a central role in the interaction of the ribosome with GTP-bound translation factors. This is Large ribosomal subunit protein uL10 from Pseudomonas putida (strain W619).